The sequence spans 157 residues: 6,7-dimethyl-8-ribityllumazine synthase (157 aa).

5-amino-6-(D-ribitylamino)uracil is bound by residues Phe-30, 64-66 (ALE), and 88-90 (CII). Residue 93 to 94 (ET) coordinates (2S)-2-hydroxy-3-oxobutyl phosphate. The active-site Proton donor is His-96. Asn-121 contacts 5-amino-6-(D-ribitylamino)uracil. Arg-135 provides a ligand contact to (2S)-2-hydroxy-3-oxobutyl phosphate.

This sequence belongs to the DMRL synthase family.

The catalysed reaction is (2S)-2-hydroxy-3-oxobutyl phosphate + 5-amino-6-(D-ribitylamino)uracil = 6,7-dimethyl-8-(1-D-ribityl)lumazine + phosphate + 2 H2O + H(+). The protein operates within cofactor biosynthesis; riboflavin biosynthesis; riboflavin from 2-hydroxy-3-oxobutyl phosphate and 5-amino-6-(D-ribitylamino)uracil: step 1/2. Functionally, catalyzes the formation of 6,7-dimethyl-8-ribityllumazine by condensation of 5-amino-6-(D-ribitylamino)uracil with 3,4-dihydroxy-2-butanone 4-phosphate. This is the penultimate step in the biosynthesis of riboflavin. In Albidiferax ferrireducens (strain ATCC BAA-621 / DSM 15236 / T118) (Rhodoferax ferrireducens), this protein is 6,7-dimethyl-8-ribityllumazine synthase.